The sequence spans 755 residues: 17S U2 SnRNP complex component HTATSF1 (755 aa).

Disordered stretches follow at residues methionine 1–aspartate 53 and glycine 81–serine 122. At serine 2 the chain carries N-acetylserine. Residues glutamate 90 to serine 122 are compositionally biased toward basic and acidic residues. 2 consecutive RRM domains span residues threonine 133–phenylalanine 218 and arginine 264–glycine 349. The tract at residues arginine 259 to tyrosine 353 is U2AF homology motif (UHM). The residue at position 297 (lysine 297) is an N6-acetyllysine. The disordered stretch occupies residues arginine 380–glutamate 415. Residues glycine 381 to isoleucine 755 form a mediates interaction with the P-TEFb complex region. Serine 387, serine 403, serine 407, and serine 409 each carry phosphoserine. Residues histidine 405–glutamate 415 show a composition bias toward polar residues. Glycyl lysine isopeptide (Lys-Gly) (interchain with G-Cter in SUMO2) cross-links involve residues lysine 429 and lysine 430. The segment at lysine 433–isoleucine 755 is disordered. Serine 445, serine 452, and serine 453 each carry phosphoserine. A compositionally biased stretch (basic and acidic residues) spans cysteine 462 to phenylalanine 476. A phosphoserine mark is found at serine 481, serine 485, serine 494, serine 498, serine 521, and serine 529. The span at leucine 508–glutamate 538 shows a compositional bias: basic and acidic residues. Acidic residues predominate over residues serine 539–cysteine 552. A compositionally biased stretch (basic and acidic residues) spans serine 553–arginine 563. Serine 557, serine 561, and serine 579 each carry phosphoserine. Positions glutamate 564–serine 579 are enriched in acidic residues. Positions glutamate 580–lysine 590 are enriched in basic and acidic residues. The segment covering glutamate 591–glycine 606 has biased composition (acidic residues). 5 positions are modified to phosphoserine: serine 597, serine 600, serine 607, serine 616, and serine 624. 2 stretches are compositionally biased toward acidic residues: residues glutamate 613 to threonine 633 and aspartate 640 to alanine 651. Phosphothreonine is present on threonine 633. Serine 642 carries the phosphoserine modification. Basic and acidic residues predominate over residues aspartate 652 to glutamate 674. Residues glutamate 675–serine 713 show a composition bias toward acidic residues. 5 positions are modified to phosphoserine: serine 676, serine 702, serine 713, serine 714, and serine 721. Residues serine 714–glycine 725 show a composition bias toward basic and acidic residues. Position 748 is a phosphoserine; by CK2 (serine 748).

It belongs to the HTATSF1 family. Component of the 17S U2 SnRNP complex, a ribonucleoprotein complex that contains small nuclear RNA (snRNA) U2 and a number of specific proteins. Within the 17S U2 SnRNP complex, interacts (via UHM region) directly with SF3B1. Component of a complex which is at least composed of HTATSF1/Tat-SF1, the P-TEFb complex components CDK9 and CCNT1, RNA polymerase II, SUPT5H, and NCL/nucleolin. Interacts with GTF2F2/RAP30 and POLR2A. Interacts with TCERG1/CA150. Interacts with (poly-ADP-ribosylated) RPA1; promoting HTATSF1 recruitment to DNA damage sites. Interacts (when phosphorylated) with TOPBP1; promoting recruitment of TOPBP1 to DNA damage sites during S-phase. Phosphorylation at Ser-748 by CK2 during S-phase in response to DNA damage promotes interaction with TOPBP1 and double-strand break (DSB) repair via homologous recombination. As to expression, widely expressed.

Its subcellular location is the nucleus. The protein resides in the chromosome. Functionally, component of the 17S U2 SnRNP complex of the spliceosome, a large ribonucleoprotein complex that removes introns from transcribed pre-mRNAs. The 17S U2 SnRNP complex (1) directly participates in early spliceosome assembly and (2) mediates recognition of the intron branch site during pre-mRNA splicing by promoting the selection of the pre-mRNA branch-site adenosine, the nucleophile for the first step of splicing. Within the 17S U2 SnRNP complex, HTATSF1 is required to stabilize the branchpoint-interacting stem loop. HTATSF1 is displaced from the 17S U2 SnRNP complex before the stable addition of the 17S U2 SnRNP complex to the spliceosome, destabilizing the branchpoint-interacting stem loop and allowing to probe intron branch site sequences. Also acts as a regulator of transcriptional elongation, possibly by mediating the reciprocal stimulatory effect of splicing on transcriptional elongation. Involved in double-strand break (DSB) repair via homologous recombination in S-phase by promoting the recruitment of TOPBP1 to DNA damage sites. Mechanistically, HTATSF1 is (1) recruited to DNA damage sites in S-phase via interaction with poly-ADP-ribosylated RPA1 and (2) phosphorylated by CK2, promoting recruitment of TOPBP1, thereby facilitating RAD51 nucleofilaments formation and RPA displacement, followed by homologous recombination. (Microbial infection) In case of infection by HIV-1, it is up-regulated by the HIV-1 proteins NEF and gp120, acts as a cofactor required for the Tat-enhanced transcription of the virus. The polypeptide is 17S U2 SnRNP complex component HTATSF1 (Homo sapiens (Human)).